Here is a 22-residue protein sequence, read N- to C-terminus: 65 kDa membrane protein (22 aa).

The interval 1–22 is disordered; that stretch reads AAKPLDKSSSSLHHGYSKVHVP.

The protein localises to the cell membrane. Functionally, binds various plasma and ECM-proteins. The protein is 65 kDa membrane protein of Staphylococcus aureus.